Reading from the N-terminus, the 316-residue chain is 2,3-dihydroxyphenylpropionate/2,3-dihydroxicinnamic acid 1,2-dioxygenase (316 aa).

Residue histidine 115 is the Proton donor of the active site. Histidine 180 serves as the catalytic Proton acceptor.

The protein belongs to the LigB/MhpB extradiol dioxygenase family. In terms of assembly, homotetramer. The cofactor is Fe(2+).

It catalyses the reaction 3-(2,3-dihydroxyphenyl)propanoate + O2 = (2Z,4E)-2-hydroxy-6-oxonona-2,4-dienedioate + H(+). The enzyme catalyses (2E)-3-(2,3-dihydroxyphenyl)prop-2-enoate + O2 = (2Z,4E,7E)-2-hydroxy-6-oxonona-2,4,7-trienedioate + H(+). Its pathway is aromatic compound metabolism; 3-phenylpropanoate degradation. In terms of biological role, catalyzes the non-heme iron(II)-dependent oxidative cleavage of 2,3-dihydroxyphenylpropionic acid and 2,3-dihydroxicinnamic acid into 2-hydroxy-6-ketononadienedioate and 2-hydroxy-6-ketononatrienedioate, respectively. This Rhodococcus rhodochrous protein is 2,3-dihydroxyphenylpropionate/2,3-dihydroxicinnamic acid 1,2-dioxygenase.